We begin with the raw amino-acid sequence, 198 residues long: Nucleoid occlusion factor SlmA (198 aa).

The HTH tetR-type domain occupies 10-70 (NRREEILQSL…SLIEFIEDSL (61 aa)). The H-T-H motif DNA-binding region spans 33 to 52 (TTAKLAASVGVSEAALYRHF). A coiled-coil region spans residues 117-144 (EQDRLQGRINQLFERIEAQLRQVLREKR).

Belongs to the nucleoid occlusion factor SlmA family. Homodimer. Interacts with FtsZ.

The protein resides in the cytoplasm. The protein localises to the nucleoid. Functionally, required for nucleoid occlusion (NO) phenomenon, which prevents Z-ring formation and cell division over the nucleoid. Acts as a DNA-associated cell division inhibitor that binds simultaneously chromosomal DNA and FtsZ, and disrupts the assembly of FtsZ polymers. SlmA-DNA-binding sequences (SBS) are dispersed on non-Ter regions of the chromosome, preventing FtsZ polymerization at these regions. The sequence is that of Nucleoid occlusion factor SlmA from Salmonella dublin (strain CT_02021853).